Reading from the N-terminus, the 524-residue chain is Importin subunit alpha-1 (524 aa).

Residues Met1–Arg42 are disordered. The IBB domain occupies Met1 to Ser59.

It belongs to the importin alpha family. As to quaternary structure, forms a complex with an importin beta subunit. In terms of tissue distribution, adult germline tissues.

It is found in the cytoplasm. Its function is as follows. Binds specifically and directly to substrates containing either a simple or bipartite NLS motif. Promotes docking of import substrates to the nuclear envelope. Seems to act as a cytosolic receptor for both simple and bipartite NLS motifs. This is Importin subunit alpha-1 (ima-1) from Caenorhabditis elegans.